Consider the following 281-residue polypeptide: Non-selective voltage-gated ion channel 2 (281 aa).

2 residues coordinate ATP: R11 and R19.

This sequence belongs to the eukaryotic mitochondrial porin family.

The protein resides in the mitochondrion outer membrane. Non-selective voltage-gated ion channel that mediates the transport of anions and cations through the mitochondrion outer membrane. The channel adopts an open conformation at low or zero membrane potential and a closed conformation at potentials above 30-40 mV. The open state has a weak anion selectivity whereas the closed state is cation-selective. Does not confer permeability to NADH. In terms of biological role, catalyzes the scrambling of phospholipids across the outer mitochondrial membrane; the mechanism is unrelated to channel activity and is capable of translocating both anionic and zwitterionic phospholipids. The chain is Non-selective voltage-gated ion channel 2 (POR2) from Saccharomyces cerevisiae (strain ATCC 204508 / S288c) (Baker's yeast).